The chain runs to 614 residues: Probable Xaa-Pro aminopeptidase P (614 aa).

4 residues coordinate Mn(2+): aspartate 409, aspartate 420, glutamate 518, and glutamate 532.

Belongs to the peptidase M24B family. Mn(2+) serves as cofactor.

The enzyme catalyses Release of any N-terminal amino acid, including proline, that is linked to proline, even from a dipeptide or tripeptide.. Its function is as follows. Catalyzes the removal of a penultimate prolyl residue from the N-termini of peptides. This Aspergillus niger (strain ATCC MYA-4892 / CBS 513.88 / FGSC A1513) protein is Probable Xaa-Pro aminopeptidase P (ampp).